We begin with the raw amino-acid sequence, 144 residues long: D-aminoacyl-tRNA deacylase (144 aa).

The Gly-cisPro motif, important for rejection of L-amino acids signature appears at 137–138 (GP).

The protein belongs to the DTD family. As to quaternary structure, homodimer.

The protein resides in the cytoplasm. The enzyme catalyses glycyl-tRNA(Ala) + H2O = tRNA(Ala) + glycine + H(+). It catalyses the reaction a D-aminoacyl-tRNA + H2O = a tRNA + a D-alpha-amino acid + H(+). Functionally, an aminoacyl-tRNA editing enzyme that deacylates mischarged D-aminoacyl-tRNAs. Also deacylates mischarged glycyl-tRNA(Ala), protecting cells against glycine mischarging by AlaRS. Acts via tRNA-based rather than protein-based catalysis; rejects L-amino acids rather than detecting D-amino acids in the active site. By recycling D-aminoacyl-tRNA to D-amino acids and free tRNA molecules, this enzyme counteracts the toxicity associated with the formation of D-aminoacyl-tRNA entities in vivo and helps enforce protein L-homochirality. The sequence is that of D-aminoacyl-tRNA deacylase from Marinomonas sp. (strain MWYL1).